Reading from the N-terminus, the 594-residue chain is MAKVDTSHRLAELRKLMKERNVDIYTYISGFTGSAGYAVITHDKAALSTDGRYFNQAEKQLDSNWELLKQGIQDVPTIQEWTADQAEGGKVVGVDPSVVTAGDARKLAEKIKKKGGEYKAIDENLVDLVWSSERPARPSEKVIVQPERYACKGFEDKIDDLRKELEKKKSLGFVVSMLDEVAWLFNLRGSDIPYNPVFFSYAVVTPTAATLYVDENKLPEDVKEHLGNKITIRPYEAIFGDVTALSKELFEASDKNETQKKFLTSNRASWALNKALGGDDKVEETRSPVGDSKAVKNEVELEGMRQCHIRDGAALSEYFAWLEDQLINKKATLDEVDGADKLEEIRKKHDMFMGLSFDTISSTGANAAVIHYKPEKGECATIDPKAIYLCDSGAQYRDGTTDTTRTLHFTEPTEMERKAYTLVLKGNMALERVKFPKGTTGFALDALARQFLWAEGLDYRHGTGHGVGSFLNVHEGPIGIGTRVQYSEVSLAVGNVVSDEPGYYEDGKFGIRIENMVMVKEVETKHKFGDKPYLGFEHVTMTPHCRNLVDMSLLTEDEKKFINEYHKEVYEKTSKYFENDALTLEWLKRETAPY.

Residues aspartate 391, aspartate 402, glutamate 500, and glutamate 514 each coordinate Mn(2+).

The protein belongs to the peptidase M24B family. Mn(2+) serves as cofactor.

It carries out the reaction Release of any N-terminal amino acid, including proline, that is linked to proline, even from a dipeptide or tripeptide.. In terms of biological role, catalyzes the removal of a penultimate prolyl residue from the N-termini of peptides. In Pyrenophora tritici-repentis (strain Pt-1C-BFP) (Wheat tan spot fungus), this protein is Probable Xaa-Pro aminopeptidase P (ampp).